Reading from the N-terminus, the 528-residue chain is Phosphoenolpyruvate carboxykinase (ATP) (528 aa).

Substrate contacts are provided by arginine 56, tyrosine 192, and lysine 198. Residues lysine 198, histidine 217, and 233-241 (GLSGTGKTT) each bind ATP. 2 residues coordinate Mn(2+): lysine 198 and histidine 217. Residue aspartate 254 participates in Mn(2+) binding. The ATP site is built by glutamate 282, arginine 319, and threonine 444. Position 319 (arginine 319) interacts with substrate.

It belongs to the phosphoenolpyruvate carboxykinase (ATP) family. It depends on Mn(2+) as a cofactor.

It localises to the cytoplasm. The enzyme catalyses oxaloacetate + ATP = phosphoenolpyruvate + ADP + CO2. The protein operates within carbohydrate biosynthesis; gluconeogenesis. Involved in the gluconeogenesis. Catalyzes the conversion of oxaloacetate (OAA) to phosphoenolpyruvate (PEP) through direct phosphoryl transfer between the nucleoside triphosphate and OAA. The sequence is that of Phosphoenolpyruvate carboxykinase (ATP) from Bacillus cereus (strain 03BB102).